Reading from the N-terminus, the 442-residue chain is Mannosylglycerate hydrolase (442 aa).

Residues Tyr-38, 42–45 (WSWD), Tyr-90, Gln-116, and Gly-176 contribute to the substrate site. The active-site Proton donor is Asp-178. Substrate-binding positions include Arg-213 and 369-370 (YW). Glu-413 functions as the Proton acceptor in the catalytic mechanism.

It belongs to the glycosyl hydrolase 63 family. As to quaternary structure, homodimer in solution.

The enzyme catalyses (2R)-2-O-(alpha-D-mannosyl)-glycerate + H2O = D-mannose + (R)-glycerate. It carries out the reaction (2R)-2-O-(alpha-D-glucopyranosyl)-glycerate + H2O = (R)-glycerate + D-glucose. Its activity is regulated as follows. Activity is not stimulated by divalent cations and not affected in the presence of EDTA. Its function is as follows. Hydrolase that catalyzes the hydrolysis of mannosylglycerate (MG), a solute produced in response to osmotic stress in thermophiles, into mannose and glycerate. Can also hydrolyze glucosylglycerate (GG) to glucose and glycerate, with similar catalytic efficiency. Is highly specific for MG and GG, and cannot use mannosylglyceramide (MGA), glucosylglycerol, mannosylglucosylglycerate (MGG), glucosylglucosylglycerate (GGG) or trehalose as substrates. The chain is Mannosylglycerate hydrolase from Rubrobacter radiotolerans (Arthrobacter radiotolerans).